A 463-amino-acid chain; its full sequence is Putative F-box protein At3g29830 (463 aa).

One can recognise an F-box domain in the interval 7 to 55; the sequence is RDRISSLPDVVLVMILSFLSFKDNVKTSILSKRWRNICYEAKNISFKES.

The sequence is that of Putative F-box protein At3g29830 from Arabidopsis thaliana (Mouse-ear cress).